The following is a 201-amino-acid chain: Translation initiation factor IF-3 (201 aa).

It belongs to the IF-3 family. As to quaternary structure, monomer.

The protein localises to the cytoplasm. In terms of biological role, IF-3 binds to the 30S ribosomal subunit and shifts the equilibrium between 70S ribosomes and their 50S and 30S subunits in favor of the free subunits, thus enhancing the availability of 30S subunits on which protein synthesis initiation begins. In Mycoplasma pneumoniae (strain ATCC 29342 / M129 / Subtype 1) (Mycoplasmoides pneumoniae), this protein is Translation initiation factor IF-3.